The chain runs to 206 residues: Thymidylate kinase (206 aa).

7 to 14 (GGEGSGKS) contacts ATP.

It belongs to the thymidylate kinase family.

The catalysed reaction is dTMP + ATP = dTDP + ADP. Phosphorylation of dTMP to form dTDP in both de novo and salvage pathways of dTTP synthesis. The sequence is that of Thymidylate kinase (tmk) from Chlamydia pneumoniae (Chlamydophila pneumoniae).